The primary structure comprises 502 residues: Neuronal acetylcholine receptor subunit alpha-7 (502 aa).

A signal peptide spans 1 to 22 (MCGGRGGIWLALAAALLHVSLQ). The Extracellular segment spans residues 23–233 (GEFQRRLYKE…VTMRRRTLYY (211 aa)). Ca(2+) is bound by residues Arg42 and Val44. N-linked (GlcNAc...) asparagine glycosylation is found at Asn46, Asn90, and Asn133. A disulfide bridge connects residues Cys150 and Cys164. Residues Ser172 and Tyr210 each coordinate Ca(2+). A disulfide bridge connects residues Cys212 and Cys213. 3 helical membrane-spanning segments follow: residues 234 to 254 (GLNL…VFLL), 262 to 282 (ISLG…VAEI), and 295 to 315 (QYFA…VIVL). Residues 260 to 267 (EKISLGIT) form an essential for TMEM35A/NACHO-mediated proper subunit assembly and trafficking to cell membrane region. The Cytoplasmic portion of the chain corresponds to 316 to 469 (RYHHHDPDGG…WKFAACVVDR (154 aa)). Residues 470-490 (LCLMAFSVFTIICTIGILMSA) form a helical membrane-spanning segment.

This sequence belongs to the ligand-gated ion channel (TC 1.A.9) family. Acetylcholine receptor (TC 1.A.9.1) subfamily. Alpha-7/CHRNA7 sub-subfamily. In terms of assembly, homopentamer. Can also form heteropentamers with CHRNB2, mainly found in basal forebrain cholinergic neurons. Interacts with RIC3; which is required for proper folding and assembly. Interacts with LYPD6. Interacts with CANX. Post-translationally, glycosylations at Asn-46, Asn-90 and Asn-133 are essential for TMEM35A/NACHO-mediated proper subunit assembly and trafficking to the cell membrane. As to expression, expressed in neurons. Expressed in umbrella cells of urothelium (at protein level).

Its subcellular location is the postsynaptic cell membrane. It is found in the cell membrane. It carries out the reaction Ca(2+)(in) = Ca(2+)(out). It catalyses the reaction K(+)(in) = K(+)(out). The enzyme catalyses Na(+)(in) = Na(+)(out). The catalysed reaction is choline(out) = choline(in). It carries out the reaction NH4(+)(in) = NH4(+)(out). It catalyses the reaction L-arginine(in) = L-arginine(out). The enzyme catalyses guanidine(out) = guanidine(in). With respect to regulation, activated by a myriad of ligands such as acetylcholine, cytisine, nicotine, choline and epibatidine. Oligomeric amyloid-beta protein 42 activates specifially CHRNA7:CHRNB2 nAchRs. Activity is modulated by positive allosteric modulators (PAMs), such as flavonoids, with a wide range of chemical diversity, pharmacological sensitivity and efficacy. AChR activity is inhibited by the antagonists alpha-conotoxons RgIA, ImI and ImII, small disulfide-constrained peptides from cone snails. Alpha-conotoxin PnIC selectively inhibits CHRNA7:CHRNB2 over CHRNA7 homopentamer. Its function is as follows. Component of neuronal acetylcholine receptors (nAChRs) that function as pentameric, ligand-gated cation channels with high calcium permeability among other activities. nAChRs are excitatory neurotrasnmitter receptors formed by a collection of nAChR subunits known to mediate synaptic transmission in the nervous system and the neuromuscular junction. Each nAchR subunit confers differential attributes to channel properties, including activation, deactivation and desensitization kinetics, pH sensitivity, cation permeability, and binding to allosteric modulators. CHRNA7 forms homopentameric neuronal acetylcholine receptors abundantly expressed in the central nervous system, characterized by fast desensitization and high calcium permeability. Also forms heteropentamers with CHRNB2, mainly expressed in basal forebrain cholinergic neurons. Involved in the modulation of calcium-dependent signaling pathways and influences the release of neurotransmitters, including dopamine, glutamate and GABA. Also expressed in non-neuronal cells such as immune cells like lymphocytes, monocytes and macrophages. In T cells, activation induces metabotropic signaling that results in an increase of intracellular Ca2+ concentrations, independent of ionotropic receptor functions. In macrophages, required for acetylcholine-mediated inhibition of TNF and other inflammatory cytokine release. Once activated by acetylcholine, nicotine or other agonists, selectively inhibits production of pro-inflammatory cytokines while leaving anti-inflammatory cytokines undisturbed. Stimulates the cholinergic anti-inflammatory pathway, controlling inflammation by inhibiting NFKB nuclear translocation and activating the JAK2-STAT3 pathway, independently of ion channel activity. Also expressed in the urothelium where it modulates reflex bladder activity by increasing intracellular calcium through internal stores and decreasing basal ATP release. This chain is Neuronal acetylcholine receptor subunit alpha-7 (Chrna7), found in Rattus norvegicus (Rat).